Reading from the N-terminus, the 187-residue chain is ATP-dependent protease subunit HslV (187 aa).

Thr7 is a catalytic residue. Residues Ala162, Cys165, and Thr168 each contribute to the Na(+) site.

It belongs to the peptidase T1B family. HslV subfamily. As to quaternary structure, a double ring-shaped homohexamer of HslV is capped on each side by a ring-shaped HslU homohexamer. The assembly of the HslU/HslV complex is dependent on binding of ATP.

The protein resides in the cytoplasm. The enzyme catalyses ATP-dependent cleavage of peptide bonds with broad specificity.. With respect to regulation, allosterically activated by HslU binding. Protease subunit of a proteasome-like degradation complex believed to be a general protein degrading machinery. This chain is ATP-dependent protease subunit HslV, found in Methylococcus capsulatus (strain ATCC 33009 / NCIMB 11132 / Bath).